Here is a 549-residue protein sequence, read N- to C-terminus: Probable protein kinase UbiB (549 aa).

Positions 123-501 (DFNETPLASA…QQQAHKSNYL (379 aa)) constitute a Protein kinase domain. ATP-binding positions include 129–137 (LASASISQV) and Lys152. Asp287 functions as the Proton acceptor in the catalytic mechanism. 2 helical membrane passes run 498–518 (SNYL…LFNQ) and 520–540 (ATLL…IIGW).

Belongs to the ABC1 family. UbiB subfamily.

It localises to the cell inner membrane. Its pathway is cofactor biosynthesis; ubiquinone biosynthesis [regulation]. Functionally, is probably a protein kinase regulator of UbiI activity which is involved in aerobic coenzyme Q (ubiquinone) biosynthesis. In Shewanella oneidensis (strain ATCC 700550 / JCM 31522 / CIP 106686 / LMG 19005 / NCIMB 14063 / MR-1), this protein is Probable protein kinase UbiB.